A 180-amino-acid chain; its full sequence is Small ribosomal subunit protein bS18 (180 aa).

2 disordered regions span residues 1 to 26 (MKNK…AHKV) and 53 to 82 (YSDK…DKES).

It belongs to the bacterial ribosomal protein bS18 family. As to quaternary structure, part of the 30S ribosomal subunit. Forms a tight heterodimer with protein bS6.

Binds as a heterodimer with protein bS6 to the central domain of the 16S rRNA, where it helps stabilize the platform of the 30S subunit. This is Small ribosomal subunit protein bS18 from Karelsulcia muelleri (strain GWSS) (Sulcia muelleri).